A 445-amino-acid polypeptide reads, in one-letter code: Protein PRRC1 (445 aa).

Disordered stretches follow at residues 1–71 and 105–167; these read MMEE…PSAP and PPVS…TGLL. The span at 27-49 shows a compositional bias: polar residues; it reads MSSTPVPLAATSSFSSPNVSSME. The span at 59-71 shows a compositional bias: pro residues; it reads PQPPLPPVRPSAP. 2 positions are modified to phosphoserine: serine 209 and serine 408.

This sequence belongs to the PRRC1 family. As to quaternary structure, interacts with PRKAR1A; resulting in PKA activation. Ubiquitously expressed with higher expression in kidney, liver and placenta. Detected in embryonic kidney cells (HEK293 cells) (at protein level). In terms of tissue distribution, specifically expressed in liver.

Its subcellular location is the golgi apparatus. It is found in the cytoplasm. In terms of biological role, may act as a regulator of the protein kinase A (PKA) activity during embryonic development. This is Protein PRRC1 (PRRC1) from Homo sapiens (Human).